Here is a 398-residue protein sequence, read N- to C-terminus: Phosphoglycerate kinase (398 aa).

Substrate-binding positions include 21 to 23, arginine 36, 59 to 62, arginine 119, and arginine 157; these read DFN and HLGR. ATP contacts are provided by residues lysine 208, glycine 296, glutamate 327, and 354–357; that span reads GGDS.

It belongs to the phosphoglycerate kinase family. In terms of assembly, monomer.

Its subcellular location is the cytoplasm. It catalyses the reaction (2R)-3-phosphoglycerate + ATP = (2R)-3-phospho-glyceroyl phosphate + ADP. The protein operates within carbohydrate degradation; glycolysis; pyruvate from D-glyceraldehyde 3-phosphate: step 2/5. The polypeptide is Phosphoglycerate kinase (Streptococcus equi subsp. zooepidemicus (strain MGCS10565)).